The primary structure comprises 95 residues: Signal recognition particle 19 kDa protein (95 aa).

It belongs to the SRP19 family. Part of the signal recognition particle protein translocation system, which is composed of SRP and FtsY. Archaeal SRP consists of a 7S RNA molecule of 300 nucleotides and two protein subunits: SRP54 and SRP19.

The protein localises to the cytoplasm. Its function is as follows. Involved in targeting and insertion of nascent membrane proteins into the cytoplasmic membrane. Binds directly to 7S RNA and mediates binding of the 54 kDa subunit of the SRP. The polypeptide is Signal recognition particle 19 kDa protein (Staphylothermus marinus (strain ATCC 43588 / DSM 3639 / JCM 9404 / F1)).